We begin with the raw amino-acid sequence, 543 residues long: Myotubularin-related protein 9-like (543 aa).

The Myotubularin phosphatase domain maps to 124–502; the sequence is AWHFHPPECY…QSLRLWQGLF (379 aa).

The protein belongs to the protein-tyrosine phosphatase family. Non-receptor class myotubularin subfamily.

In terms of biological role, probable pseudophosphatase. In Bos taurus (Bovine), this protein is Myotubularin-related protein 9-like.